A 55-amino-acid chain; its full sequence is MARELWLTHPRNFGPGSRTCRKCGNHHGIIRKYDLNMCRRCFRTDAEAIGFNKYR.

Residues C20, C23, C38, and C41 each coordinate Zn(2+).

Belongs to the universal ribosomal protein uS14 family. Requires Zn(2+) as cofactor.

The sequence is that of Small ribosomal subunit protein uS14 (rps29) from Dictyostelium discoideum (Social amoeba).